We begin with the raw amino-acid sequence, 283 residues long: Urease accessory protein UreD 1 (283 aa).

It belongs to the UreD family. As to quaternary structure, ureD, UreF and UreG form a complex that acts as a GTP-hydrolysis-dependent molecular chaperone, activating the urease apoprotein by helping to assemble the nickel containing metallocenter of UreC. The UreE protein probably delivers the nickel.

The protein resides in the cytoplasm. Functionally, required for maturation of urease via the functional incorporation of the urease nickel metallocenter. This is Urease accessory protein UreD 1 from Brucella anthropi (strain ATCC 49188 / DSM 6882 / CCUG 24695 / JCM 21032 / LMG 3331 / NBRC 15819 / NCTC 12168 / Alc 37) (Ochrobactrum anthropi).